Consider the following 185-residue polypeptide: Ribosome-recycling factor (185 aa).

Belongs to the RRF family.

It is found in the cytoplasm. Functionally, responsible for the release of ribosomes from messenger RNA at the termination of protein biosynthesis. May increase the efficiency of translation by recycling ribosomes from one round of translation to another. The polypeptide is Ribosome-recycling factor (Neisseria meningitidis serogroup A / serotype 4A (strain DSM 15465 / Z2491)).